The following is a 131-amino-acid chain: Classical arabinogalactan protein 2 (131 aa).

The first 21 residues, 1–21 (MNSKAMQALIFLGFLATSCLA), serve as a signal peptide directing secretion. Gln-22 carries the post-translational modification Pyrrolidone carboxylic acid. Pro-24, Pro-26, Pro-28, Pro-34, and Pro-35 each carry 4-hydroxyproline. 5 O-linked (Ara...) hydroxyproline glycosylation sites follow: Pro-24, Pro-26, Pro-28, Pro-34, and Pro-35. The segment at 24–106 (PAPAPTTVTP…PGPDGAADAP (83 aa)) is disordered. Composition is skewed to pro residues over residues 25-38 (APAP…PTAL) and 49-64 (IASP…PAPT). Low complexity-rich tracts occupy residues 65 to 76 (TSPTTSPVASPP) and 90 to 106 (TPTS…ADAP). A lipid anchor (GPI-anchor amidated serine) is attached at Ser-107. Residues 108 to 131 (AAWANKAFLVGTAVAGALYAVVLA) constitute a propeptide, removed in mature form.

It belongs to the classical AGP family. O-glycosylated on hydroxyprolines; noncontiguous hydroxylproline residues are glycosylated with arabinogalactan.

Its subcellular location is the cell membrane. Functionally, proteoglycan that seems to be implicated in diverse developmental roles such as differentiation, cell-cell recognition, embryogenesis and programmed cell death. The chain is Classical arabinogalactan protein 2 (AGP2) from Arabidopsis thaliana (Mouse-ear cress).